The chain runs to 281 residues: Elongation factor 1-delta (281 aa).

A2 carries the post-translational modification N-acetylalanine. The residue at position 17 (K17) is an N6-acetyllysine. Phosphoserine is present on residues S37, S44, S60, S86, and S106. The leucine-zipper stretch occupies residues 80 to 115 (LVVRIASLEVENQSLRGVVQELQQAISKLEARLNVL). The residue at position 107 (K107) is an N6-acetyllysine. An N6-acetyllysine; alternate modification is found at K117. Residue K117 is modified to N6-succinyllysine; alternate. The segment at 118-172 (SSPGHRATAPQTQHVSPMRQVEPPAKKPATPAEDDEDDDIDLFGSDNEEEDKEAA) is disordered. A Phosphoserine modification is found at S119. At T129 the chain carries Phosphothreonine. Residue S133 is modified to Phosphoserine. Position 147 is a phosphothreonine (T147). Residues 149 to 169 (AEDDEDDDIDLFGSDNEEEDK) show a composition bias toward acidic residues. Position 162 is a phosphoserine; by CK2 (S162). Residues 173–281 (QLREERLRQY…SVDIAAFNKI (109 aa)) form a catalytic (GEF) region.

Belongs to the EF-1-beta/EF-1-delta family. In terms of assembly, EF-1 is composed of 4 subunits: alpha, beta, delta isoform 1, and gamma. Isoform 2 interacts with HSF1 and NFE2L2.

It localises to the nucleus. EF-1-beta and EF-1-delta stimulate the exchange of GDP bound to EF-1-alpha to GTP, regenerating EF-1-alpha for another round of transfer of aminoacyl-tRNAs to the ribosome. Functionally, regulates induction of heat-shock-responsive genes through association with heat shock transcription factors and direct DNA-binding at heat shock promoter elements (HSE). The sequence is that of Elongation factor 1-delta (EEF1D) from Macaca fascicularis (Crab-eating macaque).